The following is a 107-amino-acid chain: FK506-binding protein 1 (107 aa).

Positions 19-107 constitute a PPIase FKBP-type domain; sequence GSNVTVHHAG…VFEVELITFK (89 aa).

It belongs to the FKBP-type PPIase family.

It catalyses the reaction [protein]-peptidylproline (omega=180) = [protein]-peptidylproline (omega=0). Inhibited by both FK506 and rapamycin. PPIases accelerate the folding of proteins by catalyzing the cis-trans isomerization of proline imidic peptide bonds in oligopeptides. This chain is FK506-binding protein 1 (fkbp1), found in Dictyostelium discoideum (Social amoeba).